Here is a 443-residue protein sequence, read N- to C-terminus: Thymidine phosphorylase (443 aa).

This sequence belongs to the thymidine/pyrimidine-nucleoside phosphorylase family. In terms of assembly, homodimer.

It carries out the reaction thymidine + phosphate = 2-deoxy-alpha-D-ribose 1-phosphate + thymine. The protein operates within pyrimidine metabolism; dTMP biosynthesis via salvage pathway; dTMP from thymine: step 1/2. Its function is as follows. The enzymes which catalyze the reversible phosphorolysis of pyrimidine nucleosides are involved in the degradation of these compounds and in their utilization as carbon and energy sources, or in the rescue of pyrimidine bases for nucleotide synthesis. The chain is Thymidine phosphorylase from Shewanella pealeana (strain ATCC 700345 / ANG-SQ1).